The following is a 288-amino-acid chain: Shikimate dehydrogenase (NADP(+)) (288 aa).

Shikimate-binding positions include 15-17 (SKS) and Thr64. Catalysis depends on Lys68, which acts as the Proton acceptor. Glu83 contributes to the NADP(+) binding site. Shikimate is bound by residues Asn92 and Asp117. Residues 141 to 145 (GAGGA), 165 to 170 (NRTVSK), and Met232 contribute to the NADP(+) site. Tyr234 lines the shikimate pocket. Gly254 contacts NADP(+).

This sequence belongs to the shikimate dehydrogenase family. As to quaternary structure, homodimer.

The catalysed reaction is shikimate + NADP(+) = 3-dehydroshikimate + NADPH + H(+). It participates in metabolic intermediate biosynthesis; chorismate biosynthesis; chorismate from D-erythrose 4-phosphate and phosphoenolpyruvate: step 4/7. Functionally, involved in the biosynthesis of the chorismate, which leads to the biosynthesis of aromatic amino acids. Catalyzes the reversible NADPH linked reduction of 3-dehydroshikimate (DHSA) to yield shikimate (SA). This chain is Shikimate dehydrogenase (NADP(+)), found in Psychrobacter cryohalolentis (strain ATCC BAA-1226 / DSM 17306 / VKM B-2378 / K5).